The sequence spans 210 residues: Probable septum site-determining protein MinC (210 aa).

Belongs to the MinC family. As to quaternary structure, interacts with MinD and FtsZ.

Cell division inhibitor that blocks the formation of polar Z ring septums. Rapidly oscillates between the poles of the cell to destabilize FtsZ filaments that have formed before they mature into polar Z rings. Prevents FtsZ polymerization. This is Probable septum site-determining protein MinC from Thermotoga sp. (strain RQ2).